A 544-amino-acid polypeptide reads, in one-letter code: MVADFDSGWYEGAGDELGQGARNGVLRERLGGNEKAQVVRSRRKAVAWNVLMVLGLILYVLYSACFAQARQWWRTNGMARGSQAGRFQLVQVHHHGVGAEHATHLVLDVDAEFRKEAAAEYSVFALHGEGQELWPEAGRRRAANPFEYAYALREERATVVRAQQQVPEFMEPYLDFALERPDLAEQIKMDWGYENMFVPNITDKETVISLALMSSNAYVRLPNTGNWRNVTSWNSSVEGDQIHLGWDENGLRAHVFANEDRSVVVLALKGTSSQVLPGSGDDDETSANDKLNDNLLFSCCCARVSYLWTTVCDCYIKSYTCEESCLESELRRKDRYYQAGLDMYKQVLAEFPDASIWLTGHSLGGALASLVARTYGVPAVTFEAPGELLATQRLHLPQPPGLPNQLDTVWHFGHTADPIFMGTCNGASSACSIAGYAMETSCHSGKSCVYDVVNDRGWRVNLLHHRIHTVIDKILDDYDAVAACVPPDICHDCYNWNYVRWRDGTTSPMPSSVASKPTPTPTSPGSPSSTCKGRNWFGYCTEYA.

Residues 1–45 (MVADFDSGWYEGAGDELGQGARNGVLRERLGGNEKAQVVRSRRKA) lie on the Cytoplasmic side of the membrane. Residues 46–66 (VAWNVLMVLGLILYVLYSACF) traverse the membrane as a helical; Signal-anchor for type II membrane protein segment. The Lumenal segment spans residues 67–544 (AQARQWWRTN…NWFGYCTEYA (478 aa)). N-linked (GlcNAc...) asparagine glycosylation is found at Asn200, Asn229, and Asn234. The active-site Charge relay system is Ser362. Residues 508–530 (PMPSSVASKPTPTPTSPGSPSST) are disordered.

Belongs to the AB hydrolase superfamily. Lipase family. Binds to both phosphatidylinositol (PI) and phosphatidylinositol 3,5-bisphosphate (PIP2).

The protein resides in the endosome. It localises to the multivesicular body membrane. It is found in the prevacuolar compartment membrane. It catalyses the reaction a triacylglycerol + H2O = a diacylglycerol + a fatty acid + H(+). Lipase which is essential for lysis of subvacuolar cytoplasm to vacuole targeted bodies and intravacuolar autophagic bodies. Involved in the lysis of intravacuolar multivesicular body (MVB) vesicles. The intravacuolar membrane disintegration by ATG15 is critical to life span extension. This chain is Putative lipase ATG15 (ATG15), found in Eremothecium gossypii (strain ATCC 10895 / CBS 109.51 / FGSC 9923 / NRRL Y-1056) (Yeast).